The sequence spans 299 residues: NAD kinase (299 aa).

The active-site Proton acceptor is Asp71. Residues 71–72 (DG), 145–146 (ND), Arg173, Asp175, 186–191 (TAYSLS), Ala210, and Gln248 contribute to the NAD(+) site.

Belongs to the NAD kinase family. A divalent metal cation is required as a cofactor.

It localises to the cytoplasm. The catalysed reaction is NAD(+) + ATP = ADP + NADP(+) + H(+). In terms of biological role, involved in the regulation of the intracellular balance of NAD and NADP, and is a key enzyme in the biosynthesis of NADP. Catalyzes specifically the phosphorylation on 2'-hydroxyl of the adenosine moiety of NAD to yield NADP. This is NAD kinase from Bordetella pertussis (strain Tohama I / ATCC BAA-589 / NCTC 13251).